The sequence spans 267 residues: Translation initiation factor 2 subunit alpha (267 aa).

Residues 10–81 (GELVVGKVDD…SAQQIDLSLK (72 aa)) enclose the S1 motif domain.

It belongs to the eIF-2-alpha family. As to quaternary structure, heterotrimer composed of an alpha, a beta and a gamma chain.

Functionally, eIF-2 functions in the early steps of protein synthesis by forming a ternary complex with GTP and initiator tRNA. The chain is Translation initiation factor 2 subunit alpha from Halobacterium salinarum (strain ATCC 29341 / DSM 671 / R1).